We begin with the raw amino-acid sequence, 613 residues long: Thioredoxin reductase 1, cytoplasmic (613 aa).

Residues 58–121 form a disordered region; that stretch reads AVLPASRPSK…LPTMNGSKDP (64 aa). The span at 65-74 shows a compositional bias: polar residues; sequence PSKTLPSSSQ. FAD is bound by residues 136 to 137, 156 to 157, 172 to 173, and 177 to 181; these read SG, DF, TC, and GCIPK. Cysteine 173 and cysteine 178 are joined by a disulfide. Lysine 182 carries the post-translational modification N6-succinyllysine. Phosphotyrosine is present on tyrosine 245. Residues 245-246 and threonine 275 contribute to the FAD site; that span reads YG. NADP(+) contacts are provided by residues arginine 280, 312–318, 335–336, arginine 340, 340–342, 406–407, and lysine 429; these read ASYVALE, RS, RGF, and GR. Residue tyrosine 314 participates in FAD binding. Residues aspartate 448, 455-457, and histidine 586 each bind FAD; that span reads ELT. Glutamate 455 contributes to the NADP(+) binding site. Catalysis depends on histidine 586, which acts as the Proton acceptor. A cross-link (cysteinyl-selenocysteine (Cys-Sec)) is located at residues 611–612; the sequence is CU. A non-standard amino acid (selenocysteine) is located at residue selenocysteine 612.

It belongs to the class-I pyridine nucleotide-disulfide oxidoreductase family. In terms of assembly, homodimer. Requires FAD as cofactor. Post-translationally, ISGylated.

It is found in the cytoplasm. The enzyme catalyses [thioredoxin]-dithiol + NADP(+) = [thioredoxin]-disulfide + NADPH + H(+). It catalyses the reaction H2O2 + NADPH + H(+) = NADP(+) + 2 H2O. Functionally, reduces disulfideprotein thioredoxin (Trx) to its dithiol-containing form. Homodimeric flavoprotein involved in the regulation of cellular redox reactions, growth and differentiation. Contains a selenocysteine residue at the C-terminal active site that is essential for catalysis. Also has reductase activity on hydrogen peroxide (H2O2). The protein is Thioredoxin reductase 1, cytoplasmic of Mus musculus (Mouse).